Here is a 437-residue protein sequence, read N- to C-terminus: Serine--tRNA ligase (437 aa).

Residue 227–229 participates in L-serine binding; the sequence is TAE. Residues 258–260 and Val274 contribute to the ATP site; that span reads RSE. Glu281 contributes to the L-serine binding site. 347–350 is a binding site for ATP; the sequence is ETHS. Position 382 (Thr382) interacts with L-serine.

The protein belongs to the class-II aminoacyl-tRNA synthetase family. Type-1 seryl-tRNA synthetase subfamily. Homodimer. The tRNA molecule binds across the dimer.

Its subcellular location is the cytoplasm. It carries out the reaction tRNA(Ser) + L-serine + ATP = L-seryl-tRNA(Ser) + AMP + diphosphate + H(+). The catalysed reaction is tRNA(Sec) + L-serine + ATP = L-seryl-tRNA(Sec) + AMP + diphosphate + H(+). It functions in the pathway aminoacyl-tRNA biosynthesis; selenocysteinyl-tRNA(Sec) biosynthesis; L-seryl-tRNA(Sec) from L-serine and tRNA(Sec): step 1/1. Functionally, catalyzes the attachment of serine to tRNA(Ser). Is also able to aminoacylate tRNA(Sec) with serine, to form the misacylated tRNA L-seryl-tRNA(Sec), which will be further converted into selenocysteinyl-tRNA(Sec). The sequence is that of Serine--tRNA ligase from Deinococcus geothermalis (strain DSM 11300 / CIP 105573 / AG-3a).